We begin with the raw amino-acid sequence, 164 residues long: Interleukin-31 (164 aa).

The N-terminal stretch at 1 to 23 (MASHSGPSTSVLFLFCCLGGWLA) is a signal peptide. N-linked (GlcNAc...) asparagine glycans are attached at residues N67 and N100.

As to expression, detected at low levels in testis, bone marrow, skeletal muscle, kidney, colon, thymus, small intestine and trachea.

It is found in the secreted. Activates STAT3 and possibly STAT1 and STAT5 through the IL31 heterodimeric receptor composed of IL31RA and OSMR. May function in skin immunity. Enhances myeloid progenitor cell survival in vitro. Induces RETNLA and serum amyloid A protein expression in macrophages. This chain is Interleukin-31 (IL31), found in Homo sapiens (Human).